The following is a 125-amino-acid chain: Small ribosomal subunit protein uS12 (125 aa).

The tract at residues 1–24 is disordered; the sequence is MPTISQLVRKPRKAKRTKSKVPAL. Basic residues predominate over residues 9–19; sequence RKPRKAKRTKS. D89 is subject to 3-methylthioaspartic acid. Residues 101–125 are disordered; it reads SLDTAGVKDRKQARSKYGSKRPKSA. Over residues 113 to 125 the composition is skewed to basic residues; that stretch reads ARSKYGSKRPKSA.

Belongs to the universal ribosomal protein uS12 family. In terms of assembly, part of the 30S ribosomal subunit. Contacts proteins S8 and S17. May interact with IF1 in the 30S initiation complex.

With S4 and S5 plays an important role in translational accuracy. Functionally, interacts with and stabilizes bases of the 16S rRNA that are involved in tRNA selection in the A site and with the mRNA backbone. Located at the interface of the 30S and 50S subunits, it traverses the body of the 30S subunit contacting proteins on the other side and probably holding the rRNA structure together. The combined cluster of proteins S8, S12 and S17 appears to hold together the shoulder and platform of the 30S subunit. The sequence is that of Small ribosomal subunit protein uS12 from Nitrosomonas europaea (strain ATCC 19718 / CIP 103999 / KCTC 2705 / NBRC 14298).